Consider the following 399-residue polypeptide: Formate-dependent phosphoribosylglycinamide formyltransferase (399 aa).

N(1)-(5-phospho-beta-D-ribosyl)glycinamide-binding positions include 8 to 9 (EL) and Glu68. Residues Arg100, Lys141, 146 to 151 (SSGHGQ), 185 to 188 (EALA), and Glu193 each bind ATP. An ATP-grasp domain is found at 105-308 (VLAHEELGLP…EFALHARAIL (204 aa)). Mg(2+)-binding residues include Glu266 and Glu279. N(1)-(5-phospho-beta-D-ribosyl)glycinamide contacts are provided by residues Asp286, Lys361, and 368–369 (RR).

This sequence belongs to the PurK/PurT family. In terms of assembly, homodimer.

It carries out the reaction N(1)-(5-phospho-beta-D-ribosyl)glycinamide + formate + ATP = N(2)-formyl-N(1)-(5-phospho-beta-D-ribosyl)glycinamide + ADP + phosphate + H(+). The protein operates within purine metabolism; IMP biosynthesis via de novo pathway; N(2)-formyl-N(1)-(5-phospho-D-ribosyl)glycinamide from N(1)-(5-phospho-D-ribosyl)glycinamide (formate route): step 1/1. In terms of biological role, involved in the de novo purine biosynthesis. Catalyzes the transfer of formate to 5-phospho-ribosyl-glycinamide (GAR), producing 5-phospho-ribosyl-N-formylglycinamide (FGAR). Formate is provided by PurU via hydrolysis of 10-formyl-tetrahydrofolate. The sequence is that of Formate-dependent phosphoribosylglycinamide formyltransferase from Bifidobacterium adolescentis (strain ATCC 15703 / DSM 20083 / NCTC 11814 / E194a).